The primary structure comprises 664 residues: Intraflagellar transport protein 70A1 (664 aa).

TPR repeat units follow at residues aspartate 11 to serine 44, arginine 45 to leucine 78, proline 153 to glutamine 186, aspartate 188 to glutamine 220, threonine 393 to isoleucine 423, proline 424 to histidine 456, and valine 458 to asparagine 491. Residues tyrosine 507 to aspartate 534 are a coiled coil. One copy of the TPR 8 repeat lies at cysteine 543–lysine 576.

It belongs to the TTC30/dfy-1/fleer family. Interacts wit the IFT B complex component IFT52.

The protein resides in the cell projection. Its subcellular location is the cilium. Functionally, required for polyglutamylation of axonemal tubulin. Plays a role in anterograde intraflagellar transport (IFT), the process by which cilia precursors are transported from the base of the cilium to the site of their incorporation at the tip. The polypeptide is Intraflagellar transport protein 70A1 (Ift70a1) (Mus musculus (Mouse)).